A 401-amino-acid polypeptide reads, in one-letter code: O-methyltransferase SAT18 (401 aa).

An S-adenosyl-L-methionine-binding site is contributed by aspartate 249. Residue histidine 300 is the Proton acceptor of the active site.

The protein belongs to the class I-like SAM-binding methyltransferase superfamily. Cation-independent O-methyltransferase family.

It functions in the pathway mycotoxin biosynthesis. In terms of biological role, O-methyltransferase; part of the satratoxin SC3 cluster involved in the biosynthesis of satratoxins, trichothecene mycotoxins that are associated with human food poisonings. Satratoxins are suggested to be made by products of multiple gene clusters (SC1, SC2 and SC3) that encode 21 proteins in all, including polyketide synthases, acetyltransferases, and other enzymes expected to modify the trichothecene skeleton. SC1 encodes 10 proteins, SAT1 to SAT10. The largest are SAT8, which encodes a putative polyketide synthase (PKS) with a conventional non-reducing architecture, and SAT10, a putative protein containing four ankyrin repeats and thus may be involved in protein scaffolding. The putative short-chain reductase SAT3 may assist the PKS in some capacity. SAT6 contains a secretory lipase domain and acts probably as a trichothecene esterase. SAT5 encodes a putative acetyltransferase, and so, with SAT6, may affect endogenous protection from toxicity. The probable transcription factor SAT9 may regulate the expression of the SC1 cluster. SC2 encodes proteins SAT11 to SAT16, the largest of which encodes the putative reducing PKS SAT13. SAT11 is a cytochrome P450 monooxygenase, while SAT14 and SAT16 are probable acetyltransferases. The SC2 cluster may be regulated by the transcription factor SAT15. SC3 is a small cluster that encodes 5 proteins, SAT17 to SAT21. SAT21 is a putative MFS-type transporter which may have a role in exporting secondary metabolites. The four other proteins putatively encoded in SC3 include the taurine hydroxylase-like protein SAT17, the O-methyltransferase SAT18, the acetyltransferase SAT19, and the Cys6-type zinc finger SAT20, the latter being probably involved in regulation of SC3 expression. This is O-methyltransferase SAT18 from Stachybotrys chartarum (strain CBS 109288 / IBT 7711) (Toxic black mold).